The chain runs to 150 residues: D-aminoacyl-tRNA deacylase (150 aa).

Residues 138-139 (GP) carry the Gly-cisPro motif, important for rejection of L-amino acids motif.

This sequence belongs to the DTD family. Homodimer.

The protein resides in the cytoplasm. The enzyme catalyses glycyl-tRNA(Ala) + H2O = tRNA(Ala) + glycine + H(+). The catalysed reaction is a D-aminoacyl-tRNA + H2O = a tRNA + a D-alpha-amino acid + H(+). Functionally, an aminoacyl-tRNA editing enzyme that deacylates mischarged D-aminoacyl-tRNAs. Also deacylates mischarged glycyl-tRNA(Ala), protecting cells against glycine mischarging by AlaRS. Acts via tRNA-based rather than protein-based catalysis; rejects L-amino acids rather than detecting D-amino acids in the active site. By recycling D-aminoacyl-tRNA to D-amino acids and free tRNA molecules, this enzyme counteracts the toxicity associated with the formation of D-aminoacyl-tRNA entities in vivo and helps enforce protein L-homochirality. The polypeptide is D-aminoacyl-tRNA deacylase (Flavobacterium psychrophilum (strain ATCC 49511 / DSM 21280 / CIP 103535 / JIP02/86)).